The primary structure comprises 1794 residues: Protein TIC 214 (1794 aa).

A run of 6 helical transmembrane segments spans residues 23-43, 64-84, 87-107, 124-144, 172-192, and 218-238; these read VVVG…SYLF, FIMG…HLAL, PHTI…WNNH, LSIQ…HFIL, VGWL…LFWI, and ILSI…PSPI. The tract at residues 244-307 is disordered; the sequence is KETSETGETE…REGVNGKEKT (64 aa). Acidic residues predominate over residues 248-258; sequence ETGETEEETDV. Basic and acidic residues-rich tracts occupy residues 259-276 and 286-307; these read EIER…KEGS and SEEK…KEKT.

The protein belongs to the TIC214 family. As to quaternary structure, part of the Tic complex.

Its subcellular location is the plastid. The protein localises to the chloroplast inner membrane. Its function is as follows. Involved in protein precursor import into chloroplasts. May be part of an intermediate translocation complex acting as a protein-conducting channel at the inner envelope. In Amborella trichopoda, this protein is Protein TIC 214.